A 305-amino-acid polypeptide reads, in one-letter code: Endonuclease III-like protein 1 (305 aa).

Residues 1–28 (MNAAGVRMVVTRARSRGTGASLRRRGEK) constitute a mitochondrion transit peptide. The tract at residues 1 to 83 (MNAAGVRMVV…HLQAPSWQPQ (83 aa)) is disordered. At Ser-64 the chain carries Phosphoserine. In terms of domain architecture, HhH spans 192-216 (RYDGDIPASVAELVALPGVGPKMAH). The Nucleophile; for N-glycosylase activity role is filled by Lys-213. The [4Fe-4S] cluster site is built by Cys-283, Cys-290, Cys-293, and Cys-299.

It belongs to the Nth/MutY family. As to quaternary structure, interacts with YBX1. Interacts with ERCC5/XPG; the interaction stimulates NTHL1 activity and NTHL1 binding to its DNA substrate. [4Fe-4S] cluster is required as a cofactor.

It localises to the nucleus. Its subcellular location is the mitochondrion. It carries out the reaction 2'-deoxyribonucleotide-(2'-deoxyribose 5'-phosphate)-2'-deoxyribonucleotide-DNA = a 3'-end 2'-deoxyribonucleotide-(2,3-dehydro-2,3-deoxyribose 5'-phosphate)-DNA + a 5'-end 5'-phospho-2'-deoxyribonucleoside-DNA + H(+). Bifunctional DNA N-glycosylase with associated apurinic/apyrimidinic (AP) lyase function that catalyzes the first step in base excision repair (BER), the primary repair pathway for the repair of oxidative DNA damage. The DNA N-glycosylase activity releases the damaged DNA base from DNA by cleaving the N-glycosidic bond, leaving an AP site. The AP lyase activity cleaves the phosphodiester bond 3' to the AP site by a beta-elimination. Primarily recognizes and repairs oxidative base damage of pyrimidines. In Bos taurus (Bovine), this protein is Endonuclease III-like protein 1.